Reading from the N-terminus, the 394-residue chain is Elongation factor Tu (394 aa).

One can recognise a tr-type G domain in the interval 10–204 (KPHVNIGTIG…AVDSYIPQPI (195 aa)). The segment at 19 to 26 (GHVDHGKT) is G1. 19-26 (GHVDHGKT) lines the GTP pocket. A Mg(2+)-binding site is contributed by Thr26. The segment at 60–64 (GITIS) is G2. The tract at residues 81–84 (DCPG) is G3. GTP contacts are provided by residues 81 to 85 (DCPGH) and 136 to 139 (NKVD). The G4 stretch occupies residues 136–139 (NKVD). Residues 174–176 (SAL) are G5.

This sequence belongs to the TRAFAC class translation factor GTPase superfamily. Classic translation factor GTPase family. EF-Tu/EF-1A subfamily. In terms of assembly, monomer.

The protein resides in the cytoplasm. It catalyses the reaction GTP + H2O = GDP + phosphate + H(+). Functionally, GTP hydrolase that promotes the GTP-dependent binding of aminoacyl-tRNA to the A-site of ribosomes during protein biosynthesis. The sequence is that of Elongation factor Tu from Rickettsia prowazekii (strain Madrid E).